Consider the following 351-residue polypeptide: L-threonine 3-dehydrogenase (351 aa).

Zn(2+) is bound at residue C39. Catalysis depends on charge relay system residues T41 and H44. Zn(2+) contacts are provided by H64, E65, C94, C97, C100, and C108. NAD(+) is bound by residues I176, D196, R201, 271–273 (LGI), and 295–296 (IY).

It belongs to the zinc-containing alcohol dehydrogenase family. Homotetramer. The cofactor is Zn(2+).

Its subcellular location is the cytoplasm. It carries out the reaction L-threonine + NAD(+) = (2S)-2-amino-3-oxobutanoate + NADH + H(+). It participates in amino-acid degradation; L-threonine degradation via oxydo-reductase pathway; glycine from L-threonine: step 1/2. Its function is as follows. Catalyzes the NAD(+)-dependent oxidation of L-threonine to 2-amino-3-ketobutyrate. This is L-threonine 3-dehydrogenase from Francisella tularensis subsp. holarctica (strain OSU18).